Here is a 422-residue protein sequence, read N- to C-terminus: Dihydrolipoyllysine-residue succinyltransferase component of 2-oxoglutarate dehydrogenase complex (422 aa).

The Lipoyl-binding domain maps to 1–76 (MPEVKVPELA…EVGQAIAIIG (76 aa)). Lys42 is subject to N6-lipoyllysine. The interval 77-185 (EGSGNASKEN…SAKEEKKYNQ (109 aa)) is disordered. Composition is skewed to polar residues over residues 80–94 (GNAS…TPQQ) and 116–130 (NQAN…NATP). Positions 127 to 163 (NATPSARRYARENGVNLAEVSPKTNDVVRKEDIDKKQ) constitute a Peripheral subunit-binding (PSBD) domain. The span at 152 to 163 (DVVRKEDIDKKQ) shows a compositional bias: basic and acidic residues. The span at 164–176 (QAPASTQTTQQAS) shows a compositional bias: low complexity. Active-site residues include His393 and Asp397.

This sequence belongs to the 2-oxoacid dehydrogenase family. In terms of assembly, forms a 24-polypeptide structural core with octahedral symmetry. Part of the 2-oxoglutarate dehydrogenase (OGDH) complex composed of E1 (2-oxoglutarate dehydrogenase), E2 (dihydrolipoamide succinyltransferase) and E3 (dihydrolipoamide dehydrogenase); the complex contains multiple copies of the three enzymatic components (E1, E2 and E3). (R)-lipoate is required as a cofactor.

It catalyses the reaction N(6)-[(R)-dihydrolipoyl]-L-lysyl-[protein] + succinyl-CoA = N(6)-[(R)-S(8)-succinyldihydrolipoyl]-L-lysyl-[protein] + CoA. Its pathway is amino-acid degradation; L-lysine degradation via saccharopine pathway; glutaryl-CoA from L-lysine: step 6/6. Its function is as follows. E2 component of the 2-oxoglutarate dehydrogenase (OGDH) complex which catalyzes the second step in the conversion of 2-oxoglutarate to succinyl-CoA and CO(2). The protein is Dihydrolipoyllysine-residue succinyltransferase component of 2-oxoglutarate dehydrogenase complex (odhB) of Staphylococcus aureus (strain USA300).